The primary structure comprises 443 residues: UDP-N-acetylmuramate--L-alanine ligase (443 aa).

110-116 (GAHGKTS) provides a ligand contact to ATP.

This sequence belongs to the MurCDEF family.

The protein localises to the cytoplasm. The catalysed reaction is UDP-N-acetyl-alpha-D-muramate + L-alanine + ATP = UDP-N-acetyl-alpha-D-muramoyl-L-alanine + ADP + phosphate + H(+). The protein operates within cell wall biogenesis; peptidoglycan biosynthesis. Cell wall formation. In Streptococcus suis (strain 98HAH33), this protein is UDP-N-acetylmuramate--L-alanine ligase.